The following is a 472-amino-acid chain: MSRRVVRQSKFRHVFGQAAKADQAYEDIRVSKVTWDSAFCAVNPKFLAIIVEAGGGGAFIVLPLAKTGRVDKNYPLVTGHTGPVLDIDWCPHNDNVIASASDDTTVMVWQIPDYTPVRNITEPVITLEGHSKRVGILSWHPTARNVLLSAGGDNVIIIWNVGTGEVLLSLDDIHPDVIHSVCWNSNGSLLATTCKDKTLRIIDPRKSQVVAERFAAHEGMRPMRAVFTRLGHIFTTGFTRMSQRELGLWDPNNFEEPVALQEMDTSNGVLLPFYDPDSSIVYLCGKGDSSIRYFEITDEPPFVHYLNTFSSKEPQRGMGFMPKRGLDVSKCEIARFYKLHERKCEPIVMTVPRKSDLFQDDLYPDTPGPEPALEADEWLSGQDAEPVLISLKEGYVPPKHREFRVTKRNILDVRPPASPRRSQSASEAPLSQQHTLETLLEEMKALRERVQAQEERITALENMLCELVDGTD.

WD repeat units lie at residues 79–119 (GHTG…PVRN), 129–169 (GHSK…VLLS), 173–212 (IHPD…VVAE), 216–259 (AHEG…EPVA), and 264–304 (DTSN…PFVH). Positions 409 to 434 (NILDVRPPASPRRSQSASEAPLSQQH) are disordered. Low complexity predominate over residues 419-429 (PRRSQSASEAP). Residues 430 to 469 (LSQQHTLETLLEEMKALRERVQAQEERITALENMLCELVD) adopt a coiled-coil conformation.

The polypeptide is Coronin-6 (Coro6) (Rattus norvegicus (Rat)).